Here is a 245-residue protein sequence, read N- to C-terminus: tRNA1(Val) (adenine(37)-N6)-methyltransferase (245 aa).

This sequence belongs to the methyltransferase superfamily. tRNA (adenine-N(6)-)-methyltransferase family.

It is found in the cytoplasm. It carries out the reaction adenosine(37) in tRNA1(Val) + S-adenosyl-L-methionine = N(6)-methyladenosine(37) in tRNA1(Val) + S-adenosyl-L-homocysteine + H(+). Its function is as follows. Specifically methylates the adenine in position 37 of tRNA(1)(Val) (anticodon cmo5UAC). This chain is tRNA1(Val) (adenine(37)-N6)-methyltransferase, found in Shigella dysenteriae serotype 1 (strain Sd197).